Reading from the N-terminus, the 121-residue chain is Neuromedin-B (121 aa).

The N-terminal stretch at 1-24 (MTLRAVGVRLLGGLLLFALLAAGA) is a signal peptide. Met-56 carries the methionine amide modification. Residues 60-121 (SLEPPSPSLL…RRLLVQTLQK (62 aa)) constitute a propeptide that is removed on maturation. Residues 61-80 (LEPPSPSLLGTAPHTSLRDQ) are disordered.

This sequence belongs to the bombesin/neuromedin-B/ranatensin family.

The protein localises to the secreted. The protein resides in the cell projection. It localises to the neuron projection. In terms of biological role, stimulates smooth muscle contraction. Induces sighing by acting directly on the pre-Botzinger complex, a cluster of several thousand neurons in the ventrolateral medulla responsible for inspiration during respiratory activity. Contributes to the induction of sneezing following exposure to chemical irritants or allergens which causes release of NMB by nasal sensory neurons and activation of NMBR-expressing neurons in the sneeze-evoking region of the brainstem. These in turn activate neurons of the caudal ventral respiratory group, giving rise to the sneezing response. Contributes to induction of acute itch, possibly through activation of the NMBR receptor on dorsal root ganglion neurons. Increases expression of NMBR and steroidogenic mediators STAR, CYP11A1 and HSD3B1 in Leydig cells, induces secretion of testosterone by Leydig cells and also promotes Leydig cell proliferation. Plays a role in the innate immune response to influenza A virus infection by enhancing interferon alpha expression and reducing expression of IL6. Plays a role in CSF1-induced proliferation of osteoclast precursors by contributing to the positive regulation of the expression of the CSF1 receptor CSF1R. This Bos taurus (Bovine) protein is Neuromedin-B (NMB).